A 259-amino-acid chain; its full sequence is Global transcriptional regulator CodY (259 aa).

The segment at 1-155 is GAF domain; it reads MNLLEKTRKI…GATVVGMEIL (155 aa). The H-T-H motif DNA-binding region spans 203–222; that stretch reads ASKIADRVGITRSVIVNALR. Residue S215 is modified to Phosphoserine.

It belongs to the CodY family.

The protein resides in the cytoplasm. Functionally, DNA-binding global transcriptional regulator which is involved in the adaptive response to starvation and acts by directly or indirectly controlling the expression of numerous genes in response to nutrient availability. During rapid exponential growth, CodY is highly active and represses genes whose products allow adaptation to nutrient depletion. The sequence is that of Global transcriptional regulator CodY from Geobacillus thermodenitrificans (strain NG80-2).